Consider the following 344-residue polypeptide: Autophagy-related protein 14 (344 aa).

The segment at 3–18 is cysteine repeats; it reads CPICHHRAHVVYCAHC. Positions 26–156 form a coiled coil; the sequence is LLKLKLDLIL…VSKICESVRD (131 aa).

Belongs to the ATG14 family. In terms of assembly, component of the autophagy-specific VPS34 PI3-kinase complex I composed of VPS15, VPS30, VPS34 and ATG14.

Its subcellular location is the preautophagosomal structure membrane. It is found in the vacuole membrane. Its function is as follows. Required for cytoplasm to vacuole transport (Cvt) and autophagy as a part of the autophagy-specific VPS34 PI3-kinase complex I. This complex is essential to recruit the ATG8-phosphatidylinositol conjugate and the ATG12-ATG5 conjugate to the pre-autophagosomal structure. ATG14 mediates the specific binding of the VPS34 PI3-kinase complex I to the preautophagosomal structure (PAS). The protein is Autophagy-related protein 14 (ATG14) of Saccharomyces cerevisiae (strain YJM789) (Baker's yeast).